The following is a 284-amino-acid chain: Genome polyprotein (284 aa).

Disordered regions lie at residues 16–57 (HQAN…GTSG) and 255–284 (GISTQEENTERHTTEDVSPSMHTLLGGKNM). The segment covering 35-44 (EQSSIQSNLS) has biased composition (polar residues).

It belongs to the potyviridae genome polyprotein family. Post-translationally, genome polyprotein of potyviruses undergoes post-translational proteolytic processing by the main proteinase NIa-pro resulting in the production of at least ten individual proteins. The P1 proteinase and the HC-pro cleave only their respective C-termini autocatalytically. 6K1 is essential for proper proteolytic separation of P3 from CI.

It is found in the virion. It catalyses the reaction RNA(n) + a ribonucleoside 5'-triphosphate = RNA(n+1) + diphosphate. Its function is as follows. An RNA-dependent RNA polymerase that plays an essential role in the virus replication. Involved in aphid transmission, cell-to-cell and systemis movement, encapsidation of the viral RNA and in the regulation of viral RNA amplification. This is Genome polyprotein from Capsicum (peppers).